Consider the following 385-residue polypeptide: Probable thioesterase PNKD (385 aa).

Over residues 32–42 (KASQNRTRALQ) the composition is skewed to polar residues. The segment at 32 to 56 (KASQNRTRALQSHSSPECKEEPEPL) is disordered. A Phosphoserine modification is found at Val121. Zn(2+)-binding residues include His172, His174, Asp176, His177, His229, Asp253, and His291.

This sequence belongs to the metallo-beta-lactamase superfamily. Glyoxalase II family. In terms of assembly, isoform 2 interacts with the sarcomeric proteins, MRLC2, MYOM1 and ENO3. It depends on Zn(2+) as a cofactor. Post-translationally, undergoes cleavage at the N-terminus. As to expression, expressed in many discrete areas of the brain.

It localises to the cell membrane. It is found in the mitochondrion. The protein resides in the cytoplasm. The enzyme catalyses a thioester + H2O = a thiol + a carboxylate + H(+). In terms of biological role, probable thioesterase that may play a role in cellular detoxification processes; it likely acts on a yet-unknown alpha-hydroxythioester substrate. In vitro, it is able to catalyze the hydrolysis of S-D-lactoyl-glutathione to form glutathione and D-lactic acid at very low rate, though this reaction is not physiologically relevant in vivo. This Mus musculus (Mouse) protein is Probable thioesterase PNKD (Pnkd).